The chain runs to 537 residues: CTP synthase (537 aa).

The amidoligase domain stretch occupies residues 1 to 268; it reads MPAKFIFVTG…DSIVVERLKL (268 aa). Residue Ser14 coordinates CTP. Ser14 contributes to the UTP binding site. 15–20 contributes to the ATP binding site; it reads SLGKGI. Tyr55 contacts L-glutamine. Asp72 is an ATP binding site. Positions 72 and 142 each coordinate Mg(2+). CTP is bound by residues 149-151, 189-194, and Lys225; these read DIE and KTKPTQ. UTP-binding positions include 189–194 and Lys225; that span reads KTKPTQ. Residues 293–534 enclose the Glutamine amidotransferase type-1 domain; that stretch reads EIALVGKYVT…IGAACRRAGG (242 aa). Gly354 is an L-glutamine binding site. Cys381 acts as the Nucleophile; for glutamine hydrolysis in catalysis. L-glutamine-binding positions include 382 to 385, Glu405, and Arg462; that span reads LGMQ. Catalysis depends on residues His507 and Glu509.

It belongs to the CTP synthase family. Homotetramer.

The catalysed reaction is UTP + L-glutamine + ATP + H2O = CTP + L-glutamate + ADP + phosphate + 2 H(+). It carries out the reaction L-glutamine + H2O = L-glutamate + NH4(+). It catalyses the reaction UTP + NH4(+) + ATP = CTP + ADP + phosphate + 2 H(+). It functions in the pathway pyrimidine metabolism; CTP biosynthesis via de novo pathway; CTP from UDP: step 2/2. Its activity is regulated as follows. Allosterically activated by GTP, when glutamine is the substrate; GTP has no effect on the reaction when ammonia is the substrate. The allosteric effector GTP functions by stabilizing the protein conformation that binds the tetrahedral intermediate(s) formed during glutamine hydrolysis. Inhibited by the product CTP, via allosteric rather than competitive inhibition. Its function is as follows. Catalyzes the ATP-dependent amination of UTP to CTP with either L-glutamine or ammonia as the source of nitrogen. Regulates intracellular CTP levels through interactions with the four ribonucleotide triphosphates. The polypeptide is CTP synthase (Moorella thermoacetica (strain ATCC 39073 / JCM 9320)).